A 95-amino-acid chain; its full sequence is 1,2-phenylacetyl-CoA epoxidase, subunit B (95 aa).

In terms of assembly, homotrimer. Forms a stable heterodimer with PaaC. Probably forms an oligomer with PaaAC.

It functions in the pathway aromatic compound metabolism; phenylacetate degradation. Functionally, component of 1,2-phenylacetyl-CoA epoxidase multicomponent enzyme system which catalyzes the reduction of phenylacetyl-CoA (PA-CoA) to form 1,2-epoxyphenylacetyl-CoA. The subunit B may play a regulatory role or be directly involved in electron transport. The sequence is that of 1,2-phenylacetyl-CoA epoxidase, subunit B (paaB) from Escherichia coli (strain K12).